A 210-amino-acid chain; its full sequence is MSFILTFWMIFLMDSIIVLISFSIFLSVWICALIIATVLTVTKINNIYCTWDFISSKFIDTYWFVLGMMFILCLLLRLCLLLYFSCINFVSFDLCKVIGFQWYWVYFLFGETTIFSNLILESDYLIGDLRILQCNHVLTLLSLVIYKLWVSAVDVIHSFTISSLGIKVDCIPGRCNEIILFATNNATLYGQCSELCGVLHGFMPIVINFI.

Topologically, residues 1–15 (MSFILTFWMIFLMDS) are mitochondrial intermembrane. The chain crosses the membrane as a helical span at residues 16 to 36 (IIVLISFSIFLSVWICALIIA). The Mitochondrial matrix portion of the chain corresponds to 37–63 (TVLTVTKINNIYCTWDFISSKFIDTYW). A helical transmembrane segment spans residues 64–84 (FVLGMMFILCLLLRLCLLLYF). The Mitochondrial intermembrane portion of the chain corresponds to 85–210 (SCINFVSFDL…GFMPIVINFI (126 aa)). Cu cation-binding residues include histidine 157, cysteine 192, glutamate 194, cysteine 196, histidine 200, and methionine 203. A Mg(2+)-binding site is contributed by glutamate 194.

Belongs to the cytochrome c oxidase subunit 2 family. As to quaternary structure, component of the cytochrome c oxidase (complex IV, CIV), a multisubunit enzyme composed of a catalytic core of 3 subunits and several supernumerary subunits. The complex exists as a monomer or a dimer and forms supercomplexes (SCs) in the inner mitochondrial membrane with ubiquinol-cytochrome c oxidoreductase (cytochrome b-c1 complex, complex III, CIII). Requires Cu cation as cofactor.

Its subcellular location is the mitochondrion inner membrane. The catalysed reaction is 4 Fe(II)-[cytochrome c] + O2 + 8 H(+)(in) = 4 Fe(III)-[cytochrome c] + 2 H2O + 4 H(+)(out). In terms of biological role, component of the cytochrome c oxidase, the last enzyme in the mitochondrial electron transport chain which drives oxidative phosphorylation. The respiratory chain contains 3 multisubunit complexes succinate dehydrogenase (complex II, CII), ubiquinol-cytochrome c oxidoreductase (cytochrome b-c1 complex, complex III, CIII) and cytochrome c oxidase (complex IV, CIV), that cooperate to transfer electrons derived from NADH and succinate to molecular oxygen, creating an electrochemical gradient over the inner membrane that drives transmembrane transport and the ATP synthase. Cytochrome c oxidase is the component of the respiratory chain that catalyzes the reduction of oxygen to water. Electrons originating from reduced cytochrome c in the intermembrane space (IMS) are transferred via the dinuclear copper A center (CU(A)) of subunit 2 and heme A of subunit 1 to the active site in subunit 1, a binuclear center (BNC) formed by heme A3 and copper B (CU(B)). The BNC reduces molecular oxygen to 2 water molecules using 4 electrons from cytochrome c in the IMS and 4 protons from the mitochondrial matrix. This Trypanosoma brucei brucei protein is Cytochrome c oxidase subunit 2 (COXII).